The sequence spans 463 residues: Type II NADH:quinone oxidoreductase Ndh (463 aa).

FAD contacts are provided by residues 21–25 (GSGFG) and V89. E184 is an active-site residue. Residues D322 and 333 to 334 (AQ) each bind FAD. A helical membrane pass occupies residues 387-407 (FSGFIAWLIWLVLHLAYLIGF).

This sequence belongs to the NADH dehydrogenase family. The cofactor is FAD.

It localises to the cell inner membrane. It catalyses the reaction a quinone + NADH + H(+) = a quinol + NAD(+). The catalysed reaction is a menaquinone + NADH + H(+) = a menaquinol + NAD(+). The enzyme catalyses a ubiquinone + NADH + H(+) = a ubiquinol + NAD(+). Inhibited by phenothiazine analogs. Inhibited by 2-mercapto-quinazolinones. Not inhibited by classic inhibitors of type I NADH dehydrogenase, such as rotenone, piericidin A and pyridaben. Functionally, alternative, nonproton pumping NADH:quinone oxidoreductase that delivers electrons to the respiratory chain by oxidation of NADH and reduction of quinones. Ndh is probably the main NADH dehydrogenase of M.tuberculosis. The chain is Type II NADH:quinone oxidoreductase Ndh from Mycobacterium tuberculosis (strain ATCC 25618 / H37Rv).